The primary structure comprises 209 residues: Uracil phosphoribosyltransferase (209 aa).

5-phospho-alpha-D-ribose 1-diphosphate contacts are provided by residues Arg79, Arg104, and 131–139 (DPMLATGGS). Uracil is bound by residues Ile194 and 199-201 (GDA). Residue Asp200 participates in 5-phospho-alpha-D-ribose 1-diphosphate binding.

It belongs to the UPRTase family. Requires Mg(2+) as cofactor.

The catalysed reaction is UMP + diphosphate = 5-phospho-alpha-D-ribose 1-diphosphate + uracil. It participates in pyrimidine metabolism; UMP biosynthesis via salvage pathway; UMP from uracil: step 1/1. With respect to regulation, allosterically activated by GTP. Functionally, catalyzes the conversion of uracil and 5-phospho-alpha-D-ribose 1-diphosphate (PRPP) to UMP and diphosphate. The sequence is that of Uracil phosphoribosyltransferase from Bacillus velezensis (strain DSM 23117 / BGSC 10A6 / LMG 26770 / FZB42) (Bacillus amyloliquefaciens subsp. plantarum).